A 348-amino-acid polypeptide reads, in one-letter code: Lipopolysaccharide heptosyltransferase 2 (348 aa).

Belongs to the glycosyltransferase 9 family.

It carries out the reaction an L-alpha-D-Hep-(1-&gt;5)-[alpha-Kdo-(2-&gt;4)]-alpha-Kdo-(2-&gt;6)-lipid A + ADP-L-glycero-beta-D-manno-heptose = an L-alpha-D-Hep-(1-&gt;3)-L-alpha-D-Hep-(1-&gt;5)-[alpha-Kdo-(2-&gt;4)]-alpha-Kdo-(2-&gt;6)-lipid A + ADP + H(+). The catalysed reaction is L-alpha-D-Hep-(1-&gt;5)-[alpha-Kdo-(2-&gt;4)]-alpha-Kdo-(2-&gt;6)-lipid A (E. coli) + ADP-L-glycero-beta-D-manno-heptose = L-alpha-D-Hep-(1-&gt;3)-L-alpha-D-Hep-(1-&gt;5)-[alpha-Kdo-(2-&gt;4)]-alpha-Kdo-(2-&gt;6)-lipid A (E. coli) + ADP + H(+). Its pathway is bacterial outer membrane biogenesis; LPS core biosynthesis. Glycosyltransferase involved in the biosynthesis of the core oligosaccharide region of lipopolysaccharide (LPS). Catalyzes the addition of the second heptose unit to the heptosyl-Kdo2-lipid A module. The analog ADP-mannose can serve as an alternative donor in place of ADP-L-glycero-D-manno-heptose, but with lower efficiency. The chain is Lipopolysaccharide heptosyltransferase 2 from Escherichia coli (strain K12).